The chain runs to 308 residues: Leucine-rich repeat-containing protein 59 (308 aa).

At 1 to 248 (MARANGRSQN…LARRQSRLRK (248 aa)) the chain is on the cytoplasmic side. 5 LRR repeats span residues 10–31 (NLRD…SEVP), 40–61 (KATA…FCNL), 63–84 (YIVR…FGRL), 86–107 (NLQH…FAQL), and 109–128 (SLKW…AKVA). Residues 154–223 (DHERELQRKL…NNNKKKAEEE (70 aa)) are a coiled coil. 3 stretches are compositionally biased toward basic and acidic residues: residues 170–187 (KQRL…DREL), 194–203 (QQKERKRRDY), and 218–237 (KKAE…PKEK). Residues 170–240 (KQRLEAQQRV…VPTPKEKKLA (71 aa)) are disordered. A helical transmembrane segment spans residues 249 to 269 (IACILLFGLMVALLGVVACRF). At 270–308 (TDLKTFEVCRSVNAVYKETLSALHSNPVLERFLQDPSSQ) the chain is on the lumenal side.

As to quaternary structure, interacts with SGO1.

It localises to the microsome membrane. Its subcellular location is the endoplasmic reticulum membrane. It is found in the nucleus envelope. In terms of biological role, required for nuclear import of FGF1. In Xenopus tropicalis (Western clawed frog), this protein is Leucine-rich repeat-containing protein 59 (lrrc59).